A 642-amino-acid polypeptide reads, in one-letter code: MVDISLIIGGPQGGGIESAGQIAIKSMVLLGYEVLGSREYHSNIMGAHSYYHLRVQQHRPRSLKLPVDGVLALDAESVFTHFRDVRPGGILVYDPGTKSTRVDAIQPMAGPLKKRLKSLFDSRGMQPVVESAVKLAEEAGARIVGLPLKEMLKTLSERTGAPVARVSRALNTLGLASMLYMLGVPVEYIEKAISLQFAGKEKVINMNVEAVRIAVDYVREAFGEPESRLPPGPRRGQTMMVATGNDLVAMGKIVGGLGVITYYPITPSSDEALYVEKHSYISIDGPLAEKLGYDKIAVAIVQMEDELASINAVLGAAAAGARASTTTSGPGFSLMNEAVSLAVEAEIPVVVTLWMRAGPSTGMPTRTGQQDLLHSIFSGHGDAPKIVLASGDHVEAFYDAIKAFNWAEEFQTPVIHLLDKYLASSMVSLAREDLDPSKVPITRGKLLDNPPADYRRYEVVEDGISPRARLGSATMVITGLEHDEYGYATEDPVMREIMMFKRERKFKVIEERIPDEEKAVLHGDSEASVALVSFGSTKQPILEALEMLRDEGVRARFAQVRLLYPFPGRLVEEMLEGVEKVIMVEQNLLGQLAMLLRAHTSIKPDSSIVKINGRPLYSFEVAGAVKRILETGEERVVVSHGS.

The YPITP motif signature appears at 263 to 267 (YPITP). Residues threonine 266 and arginine 356 each coordinate substrate.

Heterodimer composed of an alpha and a beta subunit.

The catalysed reaction is a 2-oxocarboxylate + 2 oxidized [2Fe-2S]-[ferredoxin] + CoA = an acyl-CoA + 2 reduced [2Fe-2S]-[ferredoxin] + CO2 + H(+). Its function is as follows. Catalyzes the coenzyme A-dependent oxidative decarboxylation of different 2-oxoacids such as pyruvate, 2-oxobutyrate, glyoxylate and 2-oxoglutarate to form their CoA derivatives. In Aeropyrum pernix (strain ATCC 700893 / DSM 11879 / JCM 9820 / NBRC 100138 / K1), this protein is 2-oxoacid:ferredoxin oxidoreductase 2, subunit alpha.